The chain runs to 210 residues: Fimbriae Z protein (210 aa).

A Response regulatory domain is found at 5-121; that stretch reads SVIIMDTHPI…DIFHAVQMIL (117 aa). The residue at position 56 (D56) is a 4-aspartylphosphate. An HTH luxR-type domain is found at 143–208; sequence NSSTVTVLSN…ELIDYAKLYE (66 aa). A DNA-binding region (H-T-H motif) is located at residues 167–186; that stretch reads NKEIADKLLLSNKTVSAHKS.

The protein resides in the cytoplasm. This chain is Fimbriae Z protein (fimZ), found in Escherichia coli O157:H7.